Here is a 198-residue protein sequence, read N- to C-terminus: NAD(P)H dehydrogenase (quinone) (198 aa).

The Flavodoxin-like domain maps to 4–190; sequence VLVLYYSAYG…EGAKYQGAHV (187 aa). Residues 10-15 and 78-80 contribute to the FMN site; these read SAYGHI and TRF. Tyr12 is a binding site for NAD(+). Trp98 contacts substrate. Residues 113–119 and His134 contribute to the FMN site; that span reads SSATQHG.

This sequence belongs to the WrbA family. Requires FMN as cofactor.

It carries out the reaction a quinone + NADH + H(+) = a quinol + NAD(+). It catalyses the reaction a quinone + NADPH + H(+) = a quinol + NADP(+). This Rhizobium johnstonii (strain DSM 114642 / LMG 32736 / 3841) (Rhizobium leguminosarum bv. viciae) protein is NAD(P)H dehydrogenase (quinone).